The following is a 243-amino-acid chain: Pyridoxine 5'-phosphate synthase (243 aa).

Position 7 (asparagine 7) interacts with 3-amino-2-oxopropyl phosphate. 9–10 (DH) provides a ligand contact to 1-deoxy-D-xylulose 5-phosphate. Arginine 18 serves as a coordination point for 3-amino-2-oxopropyl phosphate. The Proton acceptor role is filled by histidine 43. The 1-deoxy-D-xylulose 5-phosphate site is built by arginine 45 and histidine 50. Catalysis depends on glutamate 70, which acts as the Proton acceptor. Threonine 100 lines the 1-deoxy-D-xylulose 5-phosphate pocket. The active-site Proton donor is histidine 191. 3-amino-2-oxopropyl phosphate contacts are provided by residues glycine 192 and 213-214 (GH).

It belongs to the PNP synthase family. Homooctamer; tetramer of dimers.

It is found in the cytoplasm. It carries out the reaction 3-amino-2-oxopropyl phosphate + 1-deoxy-D-xylulose 5-phosphate = pyridoxine 5'-phosphate + phosphate + 2 H2O + H(+). The protein operates within cofactor biosynthesis; pyridoxine 5'-phosphate biosynthesis; pyridoxine 5'-phosphate from D-erythrose 4-phosphate: step 5/5. Functionally, catalyzes the complicated ring closure reaction between the two acyclic compounds 1-deoxy-D-xylulose-5-phosphate (DXP) and 3-amino-2-oxopropyl phosphate (1-amino-acetone-3-phosphate or AAP) to form pyridoxine 5'-phosphate (PNP) and inorganic phosphate. In Magnetococcus marinus (strain ATCC BAA-1437 / JCM 17883 / MC-1), this protein is Pyridoxine 5'-phosphate synthase.